Reading from the N-terminus, the 271-residue chain is Aliphatic sulfonates import ATP-binding protein SsuB (271 aa).

The ABC transporter domain occupies 13 to 234; that stretch reads ITLESIGKRY…RKGSAKLAAL (222 aa). 45–52 is an ATP binding site; the sequence is GRSGCGKS. The disordered stretch occupies residues 250–271; sequence EASRQGIKASRQGTATSRRVAN. Over residues 260–271 the composition is skewed to polar residues; sequence RQGTATSRRVAN.

It belongs to the ABC transporter superfamily. Aliphatic sulfonates importer (TC 3.A.1.17.2) family. In terms of assembly, the complex is composed of two ATP-binding proteins (SsuB), two transmembrane proteins (SsuC) and a solute-binding protein (SsuA).

The protein resides in the cell inner membrane. The enzyme catalyses ATP + H2O + aliphatic sulfonate-[sulfonate-binding protein]Side 1 = ADP + phosphate + aliphatic sulfonateSide 2 + [sulfonate-binding protein]Side 1.. Functionally, part of the ABC transporter complex SsuABC involved in aliphatic sulfonates import. Responsible for energy coupling to the transport system. The polypeptide is Aliphatic sulfonates import ATP-binding protein SsuB (Yersinia pestis bv. Antiqua (strain Antiqua)).